Here is a 198-residue protein sequence, read N- to C-terminus: MKIVGITGGIGSGKTTVCRYLKELGVNIIDADEIGHRVLQNKGIRTRITDVFGNEVMNPDGSINRKILGELVFGYPERLEHLNKITHPLIEQAIASLLEEYRQKGIKAVAIEAPLLVEAGWLKLVNEVWLITAPKESIFKRLRNRMGLSREQVMARIQSQATDNERLKYASIVINNNCRFEDLKSCVQLLAKERLELA.

In terms of domain architecture, DPCK spans 3–198 (IVGITGGIGS…LLAKERLELA (196 aa)). 11 to 16 (GSGKTT) is an ATP binding site.

It belongs to the CoaE family.

Its subcellular location is the cytoplasm. The catalysed reaction is 3'-dephospho-CoA + ATP = ADP + CoA + H(+). It participates in cofactor biosynthesis; coenzyme A biosynthesis; CoA from (R)-pantothenate: step 5/5. Catalyzes the phosphorylation of the 3'-hydroxyl group of dephosphocoenzyme A to form coenzyme A. The protein is Dephospho-CoA kinase of Dehalococcoides mccartyi (strain ATCC BAA-2266 / KCTC 15142 / 195) (Dehalococcoides ethenogenes (strain 195)).